The sequence spans 82 residues: Protein transport protein Sec61 subunit beta (82 aa).

An N-acetylmethionine modification is found at methionine 1. Residues 1–34 (MVGSGAPQRGSAAATASMRRRKPTSGAGGGGASG) form a disordered region. Residues 1–55 (MVGSGAPQRGSAAATASMRRRKPTSGAGGGGASGGAAGSMLQFYTDDAPGLKISP) lie on the Cytoplasmic side of the membrane. A helical transmembrane segment spans residues 56–76 (NVVLIMSIGFIAFVAVLHVMG).

Belongs to the SEC61-beta family. Heterotrimeric complex composed of SEC61-alpha, SEC61-beta and SEC61-gamma.

It localises to the endoplasmic reticulum membrane. Necessary for protein translocation in the endoplasmic reticulum. This is Protein transport protein Sec61 subunit beta from Arabidopsis thaliana (Mouse-ear cress).